An 87-amino-acid polypeptide reads, in one-letter code: Small ribosomal subunit protein uS15 (87 aa).

The protein belongs to the universal ribosomal protein uS15 family. As to quaternary structure, part of the 30S ribosomal subunit. Forms a bridge to the 50S subunit in the 70S ribosome, contacting the 23S rRNA.

In terms of biological role, one of the primary rRNA binding proteins, it binds directly to 16S rRNA where it helps nucleate assembly of the platform of the 30S subunit by binding and bridging several RNA helices of the 16S rRNA. Functionally, forms an intersubunit bridge (bridge B4) with the 23S rRNA of the 50S subunit in the ribosome. The protein is Small ribosomal subunit protein uS15 of Acetivibrio thermocellus (strain ATCC 27405 / DSM 1237 / JCM 9322 / NBRC 103400 / NCIMB 10682 / NRRL B-4536 / VPI 7372) (Clostridium thermocellum).